The sequence spans 204 residues: Transcriptional regulator GfcR (204 aa).

This sequence belongs to the purine/pyrimidine phosphoribosyltransferase family. GfcR subfamily.

In Methanoculleus marisnigri (strain ATCC 35101 / DSM 1498 / JR1), this protein is Transcriptional regulator GfcR.